The primary structure comprises 213 residues: Na(+)-translocating NADH-quinone reductase subunit D (213 aa).

6 helical membrane passes run 22–42 (LIAI…TTAL), 43–63 (TMGF…SLLR), 77–97 (IIIS…FFTI), 101–121 (LSVF…AESM), 131–151 (FLDG…ISII), and 183–203 (LGLM…IWIV).

The protein belongs to the NqrDE/RnfAE family. Composed of six subunits; NqrA, NqrB, NqrC, NqrD, NqrE and NqrF.

The protein resides in the cell inner membrane. It catalyses the reaction a ubiquinone + n Na(+)(in) + NADH + H(+) = a ubiquinol + n Na(+)(out) + NAD(+). NQR complex catalyzes the reduction of ubiquinone-1 to ubiquinol by two successive reactions, coupled with the transport of Na(+) ions from the cytoplasm to the periplasm. NqrA to NqrE are probably involved in the second step, the conversion of ubisemiquinone to ubiquinol. The polypeptide is Na(+)-translocating NADH-quinone reductase subunit D (Chlamydia trachomatis serovar A (strain ATCC VR-571B / DSM 19440 / HAR-13)).